A 470-amino-acid chain; its full sequence is ADAM DEC1 (470 aa).

The N-terminal stretch at 1 to 30 (MLRGISQLPAVATMSWVLLPVLWLIVQTQA) is a signal peptide. Residues 31-205 (IAIKQTPELT…QGPIRISRSL (175 aa)) constitute a propeptide that is removed on maturation. N61 carries an N-linked (GlcNAc...) asparagine glycan. The interval 173 to 200 (FTSNQEEQDPANHTCGVKSTDGKQGPIR) is disordered. The N-linked (GlcNAc...) (complex) asparagine glycan is linked to N184. The region spanning 218-412 (KYIDLYLVLD…QKPKCLLQAP (195 aa)) is the Peptidase M12B domain. N237 carries an N-linked (GlcNAc...) asparagine glycan. 2 disulfide bridges follow: C328–C407 and C369–C374. H352 contacts Zn(2+). Residue E353 is part of the active site. H356 and D362 together coordinate Zn(2+). Residues 420–470 (TPVCGNHLLEVGEDCDCGSPKECTNLCCEALTCKLKPGTDCGGDAPNHTTE) enclose the Disintegrin domain. N466 is a glycosylation site (N-linked (GlcNAc...) asparagine).

Zn(2+) serves as cofactor. Expressed highly in the small intestine and appendix, moderately in lymph node, mucosal lining of the colon, thymus, spleen and very weakly in the bone marrow. Predominantly expressed in dendritic cells (DC) of the germinal center. Weakly expressed in monocyte and highly expressed in macrophage. Absent in immature DC.

The protein resides in the secreted. Its function is as follows. May play an important role in the control of the immune response and during pregnancy. The polypeptide is ADAM DEC1 (ADAMDEC1) (Homo sapiens (Human)).